The following is a 174-amino-acid chain: Protein GrpE (174 aa).

It belongs to the GrpE family. As to quaternary structure, homodimer.

It localises to the cytoplasm. In terms of biological role, participates actively in the response to hyperosmotic and heat shock by preventing the aggregation of stress-denatured proteins, in association with DnaK and GrpE. It is the nucleotide exchange factor for DnaK and may function as a thermosensor. Unfolded proteins bind initially to DnaJ; upon interaction with the DnaJ-bound protein, DnaK hydrolyzes its bound ATP, resulting in the formation of a stable complex. GrpE releases ADP from DnaK; ATP binding to DnaK triggers the release of the substrate protein, thus completing the reaction cycle. Several rounds of ATP-dependent interactions between DnaJ, DnaK and GrpE are required for fully efficient folding. The polypeptide is Protein GrpE (Pseudothermotoga lettingae (strain ATCC BAA-301 / DSM 14385 / NBRC 107922 / TMO) (Thermotoga lettingae)).